Reading from the N-terminus, the 207-residue chain is MSRYRGPRLRIIRRLRNLPGLTNKLVESKKNQVSGSDQSNQKKVSQYCIRLEAKQRLRFNYGLTERQLLNYVRIARCAKGSTGQILLQLLEMRLDNILFRLGVVPTIPSARQLINHRHILVNNRIVDIPSFHCKPKDIITIGAPKTYQSIITKRIESFAKDQIPDHLTLSLSEPKKPKGFVNYLINRESIGLKINELLVVEYYSRKA.

Positions 92-156 constitute an S4 RNA-binding domain; sequence MRLDNILFRL…YQSIITKRIE (65 aa).

It belongs to the universal ribosomal protein uS4 family. Part of the 30S ribosomal subunit. Contacts protein S5. The interaction surface between S4 and S5 is involved in control of translational fidelity.

The protein resides in the plastid. It localises to the chloroplast. One of the primary rRNA binding proteins, it binds directly to 16S rRNA where it nucleates assembly of the body of the 30S subunit. In terms of biological role, with S5 and S12 plays an important role in translational accuracy. The polypeptide is Small ribosomal subunit protein uS4c (rps4) (Equisetum pratense (Meadow horsetail)).